Reading from the N-terminus, the 926-residue chain is Peripheral plasma membrane protein CASK (926 aa).

The 265-residue stretch at 12-276 folds into the Protein kinase domain; that stretch reads YELCEVIGKG…VYEALNHPWL (265 aa). ATP contacts are provided by residues 18–26 and lysine 41; that span reads IGKGPFSVV. Serine 51 bears the Phosphoserine mark. Aspartate 141 is a catalytic residue. A phosphoserine; by autocatalysis mark is found at serine 151 and serine 155. Threonine 182 carries the phosphothreonine modification. Phosphoserine occurs at positions 192 and 313. A calmodulin-binding region spans residues 305 to 315; the sequence is KGAVLAAVSSH. 2 L27 domains span residues 343–398 and 402–455; these read AERA…SPQI and PSDA…YSDE. A required for interaction with NRXN1 (via C-terminal tail) region spans residues 482–909; the sequence is MENVTRVRLV…DETIRHLEEA (428 aa). The 76-residue stretch at 489–564 folds into the PDZ domain; sequence RLVQFQKNTD…MLREMRGSIT (76 aa). Phosphoserine occurs at positions 571 and 577. Residues 574–610 are disordered; sequence QSSSCERDSPSTSRQSPANGHSSTNNSVSDLPSTTQP. The 71-residue stretch at 612 to 682 folds into the SH3 domain; sequence GRQIYVRAQF…PSPELQEWRV (71 aa). In terms of domain architecture, Guanylate kinase-like spans 739-911; that stretch reads RKTLVLLGAH…TIRHLEEAVE (173 aa).

It in the N-terminal section; belongs to the protein kinase superfamily. CAMK Ser/Thr protein kinase family. CaMK subfamily. Belongs to the MAGUK family. CASK and LIN7 form two mutually exclusive tripartite complexes with APBA1 or CASKIN1. Component of the brain-specific heterotrimeric complex (LIN-10-LIN-2-LIN-7 complex) composed of at least APBA1, CASK, and LIN7, which associates with the motor protein KIF17 to transport vesicles along microtubules. Forms a heterotrimeric complex with DLG1 and LIN7B via their L27 domains. Identified in a complex with ACTN4, IQGAP1, MAGI2, NPHS1, SPTAN1 and SPTBN1. Part of a complex containing CASK, TBR1 and TSPYL2. Interacts with WHRN. Interacts (via the PDZ, SH3 and guanylate kinase-like domains) with NRXN1 (via C-terminus). Interacts with CASKIN1, APBA1, LIN7(A/B/C) and L27 domain of DLG1 and isoform 2 of DLG4. Interacts with FCHSD2. Interacts with KIRREL3. Interacts with TBR1. Interacts with TSPYL2. Requires Unlike other protein kinases, does not require a divalent cation such as magnesium for catalytic activity. as cofactor. Ubiquitous. Expression is significantly greater in brain relative to kidney, lung, and liver and in fetal brain and kidney relative to lung and liver.

It localises to the nucleus. Its subcellular location is the cytoplasm. The protein localises to the cell membrane. It catalyses the reaction L-seryl-[protein] + ATP = O-phospho-L-seryl-[protein] + ADP + H(+). It carries out the reaction L-threonyl-[protein] + ATP = O-phospho-L-threonyl-[protein] + ADP + H(+). Differs from archetypal CaMK members in that the kinase domain exhibits a constitutively active conformation and the autoinhibitory region does not engage in direct contact with the ATP-binding cleft, although it still binds Ca(2+)/CAM. Multidomain scaffolding Mg(2+)-independent protein kinase that catalyzes the phosphotransfer from ATP to proteins such as NRXN1, and plays a role in synaptic transmembrane protein anchoring and ion channel trafficking. Contributes to neural development and regulation of gene expression via interaction with the transcription factor TBR1. Binds to cell-surface proteins, including amyloid precursor protein, neurexins and syndecans. May mediate a link between the extracellular matrix and the actin cytoskeleton via its interaction with syndecan and with the actin/spectrin-binding protein 4.1. Component of the LIN-10-LIN-2-LIN-7 complex, which associates with the motor protein KIF17 to transport vesicles containing N-methyl-D-aspartate (NMDA) receptor subunit NR2B along microtubules. The chain is Peripheral plasma membrane protein CASK from Homo sapiens (Human).